A 563-amino-acid polypeptide reads, in one-letter code: Tripeptidyl-peptidase 1 (563 aa).

Residues 1–19 (MRLRTCLLGLLALCVASKC) form the signal peptide. Residues 20-195 (SYSPEPDQQR…PEPQVSGTVG (176 aa)) constitute a propeptide, removed in mature form. Residues cysteine 111 and cysteine 122 are joined by a disulfide bond. Residues 199–563 (GVTPSVIRQR…PALLKALIKP (365 aa)) form the Peptidase S53 domain. N-linked (GlcNAc...) asparagine glycans are attached at residues asparagine 210 and asparagine 222. Residues glutamate 272 and aspartate 276 each act as charge relay system in the active site. Residues asparagine 286, asparagine 313, and asparagine 443 are each glycosylated (N-linked (GlcNAc...) asparagine). Intrachain disulfides connect cysteine 365-cysteine 526 and cysteine 522-cysteine 537. Serine 475 (charge relay system) is an active-site residue. Ca(2+)-binding residues include aspartate 517 and valine 518. Residues glycine 539, glycine 541, and aspartate 543 each contribute to the Ca(2+) site.

As to quaternary structure, monomer. Interacts with CLN5. Interacts with CLN3. Requires Ca(2+) as cofactor. In terms of processing, activated by autocatalytic proteolytical processing upon acidification. N-glycosylation is required for processing and activity.

It localises to the lysosome. It is found in the melanosome. It catalyses the reaction Release of an N-terminal tripeptide from a polypeptide, but also has endopeptidase activity.. Lysosomal serine protease with tripeptidyl-peptidase I activity. May act as a non-specific lysosomal peptidase which generates tripeptides from the breakdown products produced by lysosomal proteinases. Requires substrates with an unsubstituted N-terminus. In Canis lupus familiaris (Dog), this protein is Tripeptidyl-peptidase 1 (TPP1).